Here is a 358-residue protein sequence, read N- to C-terminus: Peptide chain release factor 1 (358 aa).

Residue Q233 is modified to N5-methylglutamine.

This sequence belongs to the prokaryotic/mitochondrial release factor family. Methylated by PrmC. Methylation increases the termination efficiency of RF1.

The protein resides in the cytoplasm. Peptide chain release factor 1 directs the termination of translation in response to the peptide chain termination codons UAG and UAA. In Listeria monocytogenes serovar 1/2a (strain ATCC BAA-679 / EGD-e), this protein is Peptide chain release factor 1.